The primary structure comprises 476 residues: Glycogen synthase (476 aa).

Lys-15 provides a ligand contact to ADP-alpha-D-glucose.

It belongs to the glycosyltransferase 1 family. Bacterial/plant glycogen synthase subfamily.

It carries out the reaction [(1-&gt;4)-alpha-D-glucosyl](n) + ADP-alpha-D-glucose = [(1-&gt;4)-alpha-D-glucosyl](n+1) + ADP + H(+). Its pathway is glycan biosynthesis; glycogen biosynthesis. Its function is as follows. Synthesizes alpha-1,4-glucan chains using ADP-glucose. This Haemophilus influenzae (strain ATCC 51907 / DSM 11121 / KW20 / Rd) protein is Glycogen synthase (glgA).